We begin with the raw amino-acid sequence, 331 residues long: Small ribosomal subunit protein uS2 (331 aa).

Belongs to the universal ribosomal protein uS2 family.

This is Small ribosomal subunit protein uS2 from Rhodopseudomonas palustris (strain ATCC BAA-98 / CGA009).